Consider the following 603-residue polypeptide: DNA mismatch repair protein MutL (603 aa).

Belongs to the DNA mismatch repair MutL/HexB family.

In terms of biological role, this protein is involved in the repair of mismatches in DNA. It is required for dam-dependent methyl-directed DNA mismatch repair. May act as a 'molecular matchmaker', a protein that promotes the formation of a stable complex between two or more DNA-binding proteins in an ATP-dependent manner without itself being part of a final effector complex. This chain is DNA mismatch repair protein MutL, found in Nitrobacter winogradskyi (strain ATCC 25391 / DSM 10237 / CIP 104748 / NCIMB 11846 / Nb-255).